An 873-amino-acid chain; its full sequence is Potassium voltage-gated channel subfamily KQT member 3 (873 aa).

Residues 1–41 form a disordered region; it reads MGLKARRAAGAAGGGGGEGGGGGGGAANPAGGDSAVAGDEE. Topologically, residues 1–121 are cytoplasmic; it reads MGLKARRAAG…IYDALERPRG (121 aa). Gly residues predominate over residues 11-26; sequence AAGGGGGEGGGGGGGA. At T82 the chain carries Phosphothreonine. A helical membrane pass occupies residues 122–144; that stretch reads WALLYHALVFLIVLGCLILAVLT. Residues 145–154 lie on the Extracellular side of the membrane; sequence TFKEYETVSG. Residues 155 to 176 form a helical membrane-spanning segment; that stretch reads DWLLLLETFAIFIFGAEFALRI. The Cytoplasmic segment spans residues 177–194; the sequence is WAAGCCCRYKGWRGRLKF. Residues 195-214 traverse the membrane as a helical segment; that stretch reads ARKPLCMLDIFVLIASVPVV. Residues 215–226 are Extracellular-facing; it reads AVGNQGNVLATS. A helical; Voltage-sensor transmembrane segment spans residues 227–245; it reads LRSLRFLQILRMLRMDRRG. R244 provides a ligand contact to a 1,2-diacyl-sn-glycero-3-phospho-(1D-myo-inositol-4,5-bisphosphate). The Cytoplasmic portion of the chain corresponds to 246 to 257; that stretch reads GTWKLLGSAICA. The chain crosses the membrane as a helical span at residues 258 to 283; that stretch reads HSKELITAWYIGFLTLILSSFLVYLV. K260 is an a 1,2-diacyl-sn-glycero-3-phospho-(1D-myo-inositol-4,5-bisphosphate) binding site. The Extracellular segment spans residues 284–303; the sequence is EKDVPEMDAQGEEMKEEFET. The segment at residues 304–316 is an intramembrane region (pore-forming); the sequence is YADALWWGLITLA. The Selectivity filter signature appears at 317-322; it reads TIGYGD. Over 317–327 the chain is Extracellular; that stretch reads TIGYGDKTPKT. Residues 328–354 traverse the membrane as a helical segment; that stretch reads WEGRLIAATFSLIGVSFFALPAGILGS. The Cytoplasmic portion of the chain corresponds to 355–873; sequence GLALKVQEQH…SIWTPSNKPT (519 aa). A mediates interaction with calmodulin region spans residues 357–538; it reads ALKVQEQHRQ…RLYKKKFKET (182 aa). K367 provides a ligand contact to a 1,2-diacyl-sn-glycero-3-phospho-(1D-myo-inositol-4,5-bisphosphate). Disordered stretches follow at residues 575–603, 723–742, and 766–873; these read PGPPSTPKHKKSQKGSAFTYPSQQSPRNE, RGGPSSTKAQANLPSSGSTY, and ELQG…NKPT. Polar residues-rich tracts occupy residues 588-601, 725-741, and 844-873; these read KGSAFTYPSQQSPR, GPSSTKAQANLPSSGST, and DPFTPSGSMPMSSTGDGISDSIWTPSNKPT.

Belongs to the potassium channel family. KQT (TC 1.A.1.15) subfamily. Kv7.3/KCNQ3 sub-subfamily. Heterotetramer with KCNQ2; forms heterotetrameric native M-channel responsible for the M-current. Interacts with calmodulin; the interaction is calcium-independent, constitutive and participates in the proper assembly of a functional M-channel. Heteromultimer with KCNQ5. May associate with KCNE2. Interacts with IQCJ-SCHIP1. Interacts (via the pore module) with SLC5A3/SMIT1; forms a coregulatory complex that alters ion selectivity, voltage dependence and gating kinetics of the channel. In terms of processing, KCNQ2/KCNQ3 are ubiquitinated by NEDD4L. Ubiquitination leads to protein degradation. Degradation induced by NEDD4L is inhibited by USP36. In terms of tissue distribution, expressed in dorsal root ganglion (DRG) neurons.

Its subcellular location is the cell membrane. The enzyme catalyses K(+)(in) = K(+)(out). The catalysed reaction is Rb(+)(in) = Rb(+)(out). It carries out the reaction Cs(+)(in) = Cs(+)(out). It catalyses the reaction Na(+)(in) = Na(+)(out). With respect to regulation, phosphatidylinositol-4,5-bisphosphate (PIP2) potentiates the activation of KCNQ channels by enhancing the electro-mechanical coupling of the voltage-sensing domain (VSD) and the pore-forming domain (PD). In the closed state of the channel, PIP2 is anchored at the S2-S3 loop; upon channel activation, PIP2 interacts with the S4-S5 linker and is involved in channel gating. Calcium suppresses KCNQ2-KCNQ3 channel currents, with calcium-bound calmodulin inducing a change in channel configuration which leads to the reduction of channel affinity for PIP2 and subsequent current suppression. Functionally, pore-forming subunit of the voltage-gated potassium (Kv) M-channel which is responsible for the M-current, a key controller of neuronal excitability. M-channel is composed of pore-forming subunits KCNQ2 and KCNQ3 assembled as heterotetramers. The native M-current has a slowly activating and deactivating potassium conductance which plays a critical role in determining the subthreshold electrical excitability of neurons as well as the responsiveness to synaptic inputs. M-channel is selectively permeable in vitro to other cations besides potassium, in decreasing order of affinity K(+) &gt; Rb(+) &gt; Cs(+) &gt; Na(+). M-channel association with SLC5A3/SMIT1 alters channel ion selectivity, increasing Na(+) and Cs(+) permeation relative to K(+). Suppressed by activation of M1 muscarinic acetylcholine receptors. KCNQ3 also associates with KCNQ5 to form a functional channel in vitro and may also contribute to the M-current in brain. The sequence is that of Potassium voltage-gated channel subfamily KQT member 3 from Mus musculus (Mouse).